The chain runs to 286 residues: Short-chain dehydrogenase fogD (286 aa).

Residues Val8, Thr34, Asp55, Tyr147, Lys151, Val180, and Thr182 each contribute to the NADP(+) site. Tyr147 acts as the Proton acceptor in catalysis. Residue Lys151 is the Lowers pKa of active site Tyr of the active site.

This sequence belongs to the short-chain dehydrogenases/reductases (SDR) family.

It participates in secondary metabolite biosynthesis. Short-chain dehydrogenase; part of the gene cluster that mediates the biosynthesis of flavoglaucin and congeners (including aspergin, dihydroauroglaucin and auroglaucin), prenylated salicylaldehyde derivatives carrying a saturated or an unsaturated C-7 side chain. The PKS fogA releases the carboxylic acid (8E,10E,12E)-3,5,7-trihydroxytetradeca-8,10,12-trienoic acid as its product, as well as derivatives with one and two double bonds. FogA is indeed able to reduce the initial triketide, thus being at least partially responsible for the differently saturated heptyl side chains of flavoglaucin congeners. The oxidoreductases fogB, fogC and fogD modify the nascent polyketide in fogA-bound form and, together, fogA, fogB, fogC and fogD are necessary for the formation of the aromatic core and the cyclized PKS products are released as salicyl alcohols. In particular, fogB is responsible for oxidation of a hydroxyl group or reduction of remaining double bond(s) at the C-7 residue whereas fogD is probably involved in the reductive release of the modified PKS products. The cytochrome P450 monooxygenase fogE is then responsible for the hydroxylation at C-3 of the benzene ring. The fogE products are substrates of the prenyltransferase fogH and the prenylated benzyl alcohols are subsequently oxidized by the fogF to produce the final aryl aldehydes flavoglaucin and congeners. The short-chain dehydrogenase fogG does not seem to be involved in the biosynthesis of the prenylated salicylaldehyde derivatives. The protein is Short-chain dehydrogenase fogD of Aspergillus ruber (strain CBS 135680).